Consider the following 284-residue polypeptide: Bifunctional protein FolD (284 aa).

Residues 166–168 (GAS) and Ile-232 each bind NADP(+).

This sequence belongs to the tetrahydrofolate dehydrogenase/cyclohydrolase family. As to quaternary structure, homodimer.

The catalysed reaction is (6R)-5,10-methylene-5,6,7,8-tetrahydrofolate + NADP(+) = (6R)-5,10-methenyltetrahydrofolate + NADPH. The enzyme catalyses (6R)-5,10-methenyltetrahydrofolate + H2O = (6R)-10-formyltetrahydrofolate + H(+). It participates in one-carbon metabolism; tetrahydrofolate interconversion. Its function is as follows. Catalyzes the oxidation of 5,10-methylenetetrahydrofolate to 5,10-methenyltetrahydrofolate and then the hydrolysis of 5,10-methenyltetrahydrofolate to 10-formyltetrahydrofolate. This chain is Bifunctional protein FolD, found in Pseudomonas paraeruginosa (strain DSM 24068 / PA7) (Pseudomonas aeruginosa (strain PA7)).